The sequence spans 434 residues: Maintenance of mitochondrial morphology protein 1 (434 aa).

The Lumenal portion of the chain corresponds to methionine 1 to glycine 105. A helical membrane pass occupies residues leucine 106 to phenylalanine 126. Residues serine 127–aspartate 434 lie on the Cytoplasmic side of the membrane. One can recognise an SMP-LTD domain in the interval serine 194–proline 408. The disordered stretch occupies residues lysine 415–aspartate 434.

It belongs to the MMM1 family. In terms of assembly, homodimer. Component of the ER-mitochondria encounter structure (ERMES) or MDM complex, composed of MMM1, MDM10, MDM12 and MDM34. An MMM1 homodimer associates with one molecule of MDM12 on each side in a pairwise head-to-tail manner, and the SMP-LTD domains of MMM1 and MDM12 generate a continuous hydrophobic tunnel for phospholipid trafficking.

It localises to the endoplasmic reticulum membrane. Its function is as follows. Component of the ERMES/MDM complex, which serves as a molecular tether to connect the endoplasmic reticulum (ER) and mitochondria. Components of this complex are involved in the control of mitochondrial shape and protein biogenesis, and function in nonvesicular lipid trafficking between the ER and mitochondria. The MDM12-MMM1 subcomplex functions in the major beta-barrel assembly pathway that is responsible for biogenesis of all outer membrane beta-barrel proteins, and acts in a late step after the SAM complex. The MDM10-MDM12-MMM1 subcomplex further acts in the TOM40-specific pathway after the action of the MDM12-MMM1 complex. Essential for establishing and maintaining the structure of mitochondria and maintenance of mtDNA nucleoids. This Kluyveromyces lactis (strain ATCC 8585 / CBS 2359 / DSM 70799 / NBRC 1267 / NRRL Y-1140 / WM37) (Yeast) protein is Maintenance of mitochondrial morphology protein 1.